The chain runs to 751 residues: Protein CLMP1 (751 aa).

A compositionally biased stretch (basic residues) spans 1-11 (MGKSGGRKKKS). The tract at residues 1–33 (MGKSGGRKKKSGGSNSNSSQVNSSETSGLSKPS) is disordered. Over residues 12–28 (GGSNSNSSQVNSSETSG) the composition is skewed to low complexity. TPR repeat units lie at residues 51-84 (AHEL…IPKS), 89-124 (AVFH…QPGF), and 125-158 (TRAL…DPNH). Positions 290 to 382 (WRPLKFVYDH…GMLRLHVVDV (93 aa)) constitute a PB1 domain. Positions 386–443 (QEPMLLEEEEEEVEEKPVIEEVISSPTESLSETEINTEKTDKEVEKEKASSSEDPETK) are disordered. Over residues 390–399 (LLEEEEEEVE) the composition is skewed to acidic residues. Positions 409-419 (SSPTESLSETE) are enriched in polar residues. Residues 421 to 443 (NTEKTDKEVEKEKASSSEDPETK) show a composition bias toward basic and acidic residues. TPR repeat units lie at residues 434–468 (ASSS…DPDA), 481–514 (SEAL…AFFN), and 536–570 (EVVA…KPDF). Positions 630–648 (EQRMDDLKNPNSNKKEEVS) are enriched in basic and acidic residues. The disordered stretch occupies residues 630-663 (EQRMDDLKNPNSNKKEEVSKRRKKQGGDGNEEVS).

Interacts with myosin XI-K. As to expression, expressed in roots, stems, leaves, apex, flowers and seeds. Detected throughout the petiole in juvenile and young leaves, but restricted to the petiole midvein in older leaves. Expressed in hydathodes, at the base of the trichome, in the vascular cylinder of primary root and lateral root, in emerging lateral root primordia, in pollen and in developing embryos, but not in mature embryos.

The protein resides in the cytoplasm. In terms of biological role, required for plastid separation and partitioning during cell division. Not involved in plastid constriction or in the organization of cytoplasmic actin cables. Contributes to polar growth of root hairs. The protein is Protein CLMP1 of Arabidopsis thaliana (Mouse-ear cress).